Here is a 183-residue protein sequence, read N- to C-terminus: MTKQPEDWLDDVPGDDIEDEDDEIIWVSKSEIKRDAEELKRLGAELVDLGKNALDKIPLDADLRDAIELAQRIKMEGRRRQLQLIGKMLRQRDVEPIRQALDKLKNRHNQQVVLFHKLEHLRDRLIVEGDDAVVEVLTLWPHADRQQLRSLIRNAKKEKEGNKPPKSARQIFQYLRELAENEG.

It belongs to the DarP family.

It is found in the cytoplasm. Functionally, member of a network of 50S ribosomal subunit biogenesis factors which assembles along the 30S-50S interface, preventing incorrect 23S rRNA structures from forming. Promotes peptidyl transferase center (PTC) maturation. The protein is Dual-action ribosomal maturation protein DarP of Salmonella gallinarum (strain 287/91 / NCTC 13346).